Here is a 1723-residue protein sequence, read N- to C-terminus: Homeobox protein 5 (1723 aa).

Low complexity predominate over residues Gln36–Gln50. Disordered regions lie at residues Gln36–Thr425, Ser440–Gln522, Glu543–Thr756, Gly878–Leu978, Ile1080–Asn1214, Val1226–Gln1264, Ile1345–Ser1399, Gln1456–Thr1498, and His1513–Lys1547. The segment covering Asp51–Tyr72 has biased composition (polar residues). Composition is skewed to low complexity over residues Asn73 to Ser107 and Asn114 to Asn212. Polar residues-rich tracts occupy residues Ser223–Pro237 and Gly244–Asp257. Low complexity-rich tracts occupy residues Asn258–Ser284 and Asn291–Asn350. A coiled-coil region spans residues Tyr300 to Gln351. Positions Gln351–Met369 are enriched in polar residues. Low complexity-rich tracts occupy residues Gln371–Ser421 and Ser440–Ser465. Residues Met483 to Asn510 show a composition bias toward polar residues. Composition is skewed to low complexity over residues Leu511 to Gln522, Asn544 to Asn571, and Asn581 to Asn593. Residues His632–Met655 are compositionally biased toward polar residues. The segment covering Leu660–Phe669 has biased composition (gly residues). Positions Ile673–Gln685 are enriched in polar residues. Low complexity-rich tracts occupy residues Ser686–Met699, Ser710–Leu727, and Ser734–Thr745. Residues Pro746–Leu755 show a composition bias toward pro residues. Residues Asn882–Thr928 show a composition bias toward low complexity. Residues Ser929–Phe945 are compositionally biased toward polar residues. Low complexity-rich tracts occupy residues Gln946–Ser977 and Asn1082–Ser1146. Composition is skewed to polar residues over residues Pro1147 to Gly1159 and Asp1176 to Gln1187. A coiled-coil region spans residues Gln1193 to Leu1270. Low complexity predominate over residues Gln1194 to Asn1214. Positions Val1226–Glu1242 are enriched in polar residues. Composition is skewed to low complexity over residues Gln1243 to Gln1264, Asn1347 to Pro1384, Gln1456 to Pro1480, Ser1487 to Thr1498, and Ser1518 to Pro1528. Residues Val1431 to Thr1464 adopt a coiled-coil conformation. The span at His1529–Ser1543 shows a compositional bias: polar residues. The segment at residues Ser1543 to Pro1607 is a DNA-binding region (homeobox). One can recognise an EF-hand domain in the interval Phe1553 to Thr1588. 2 disordered regions span residues Asn1598–Ser1625 and Leu1661–Glu1723. Residues Thr1612–Ser1625 show a composition bias toward low complexity. Residues Leu1632–Asn1702 are a coiled coil. Over residues Ser1665–Met1675 the composition is skewed to polar residues. Positions Asn1676–Glu1723 are enriched in low complexity.

It is found in the nucleus. In terms of biological role, putative transcription factor. This chain is Homeobox protein 5 (hbx5-1), found in Dictyostelium discoideum (Social amoeba).